The sequence spans 767 residues: Glucoamylase S1 (767 aa).

The signal sequence occupies residues 1 to 21 (MQRPFLLAYLVLSLLFNSALG). Disordered stretches follow at residues 29–83 (RGSS…ETTI) and 125–149 (TTTVPCSTSPSETASESTTTSPTTP). The span at 30–48 (GSSSSNITSSGPSSTPFSS) shows a compositional bias: low complexity. Residue N35 is glycosylated (N-linked (GlcNAc...) asparagine). Residues 49–66 (ATESFSTGTTVTPSSSKY) show a composition bias toward polar residues. Low complexity-rich tracts occupy residues 71 to 83 (TETSVSSTTETTI) and 131 to 149 (STSPSETASESTTTSPTTP). 5 N-linked (GlcNAc...) asparagine glycosylation sites follow: N308, N322, N414, N423, and N434. A h subunit region spans residues 348–691 (VSIERIFENI…ASTTLYQLIY (344 aa)). W455 contributes to the substrate binding site. An N-linked (GlcNAc...) asparagine glycan is attached at N513. D518 (proton acceptor) is an active-site residue. Residue E521 is the Proton donor of the active site. N-linked (GlcNAc...) asparagine glycans are attached at residues N546, N645, N650, N720, and N741. A y subunit region spans residues 692–767 (RHISEQHDLV…LKATWEQTGN (76 aa)).

This sequence belongs to the glycosyl hydrolase 15 family.

The catalysed reaction is Hydrolysis of terminal (1-&gt;4)-linked alpha-D-glucose residues successively from non-reducing ends of the chains with release of beta-D-glucose.. The chain is Glucoamylase S1 (STA1) from Saccharomyces cerevisiae (Baker's yeast).